A 591-amino-acid polypeptide reads, in one-letter code: 4-coumarate--CoA ligase-like 3 (591 aa).

ATP is bound by residues Ser-228, Ser-229, Gly-230, Thr-231, Ser-232, and Lys-236. Tyr-280 contacts (E)-4-coumaroyl-AMP. Residue Arg-301 coordinates CoA. The segment at 303–375 is SBD1; it reads DAGDAVAAIG…QAFPHVDFIQ (73 aa). The (E)-4-coumaroyl-AMP site is built by Ala-353, Gln-375, Gly-376, and Thr-380. Residues Gln-375, Gly-376, Thr-380, Asp-459, and Arg-474 each contribute to the ATP site. The tract at residues 376–440 is SBD2; that stretch reads GYGMTESTAV…LHGPGIMKGY (65 aa). Residues Lys-476 and Lys-480 each coordinate (E)-4-coumaroyl-AMP. Residues Lys-482 and Gly-483 each coordinate CoA. Lys-565 lines the ATP pocket.

Belongs to the ATP-dependent AMP-binding enzyme family. Mg(2+) is required as a cofactor.

The enzyme catalyses (E)-4-coumarate + ATP + CoA = (E)-4-coumaroyl-CoA + AMP + diphosphate. It catalyses the reaction (E)-4-coumarate + ATP + H(+) = (E)-4-coumaroyl-AMP + diphosphate. The catalysed reaction is (E)-4-coumaroyl-AMP + CoA = (E)-4-coumaroyl-CoA + AMP + H(+). In terms of biological role, carboxylate--CoA ligase that may use 4-coumarate as substrate. Follows a two-step reaction mechanism, wherein the carboxylate substrate first undergoes adenylation by ATP, followed by a thioesterification in the presence of CoA to yield the final CoA thioester. The protein is 4-coumarate--CoA ligase-like 3 (4CLL3) of Oryza sativa subsp. japonica (Rice).